The primary structure comprises 726 residues: Kinesin-like protein KIN-10B (726 aa).

Disordered stretches follow at residues 1–20, 60–82, and 402–423; these read MEQQQKQEPGGGGGGVRVVA, AATAAASGRGDGPKDKQQQQQQK, and KNARPGFNNSGVKGGQTPTANR. In terms of domain architecture, Kinesin motor spans 15 to 359; that stretch reads GVRVVARICP…LALASRSSQV (345 aa). Positions 408–423 are enriched in polar residues; that stretch reads FNNSGVKGGQTPTANR.

It belongs to the TRAFAC class myosin-kinesin ATPase superfamily. Kinesin family. KIN-10 subfamily.

The polypeptide is Kinesin-like protein KIN-10B (Oryza sativa subsp. japonica (Rice)).